A 206-amino-acid polypeptide reads, in one-letter code: Probable N-acetyltransferase 14 (206 aa).

The region spanning 6–206 (LSVREMREDE…TLVREFSKDL (201 aa)) is the N-acetyltransferase domain. A helical membrane pass occupies residues 57 to 77 (FVLASFALALLLPVFLAVAAV).

The protein belongs to the camello family. As to expression, expressed in K-562 and HeLa cell lines and in brain.

Its subcellular location is the membrane. In terms of biological role, probable acetyltransferase. Its function is as follows. May act as a transcription factor that regulates the expression of coproporphyrinogen oxidase by binding to a promoter regulatory element. This chain is Probable N-acetyltransferase 14 (NAT14), found in Homo sapiens (Human).